The sequence spans 492 residues: UDP-N-acetylmuramoyl-L-alanyl-D-glutamate--2,6-diaminopimelate ligase (492 aa).

Ser-21 is a binding site for UDP-N-acetyl-alpha-D-muramoyl-L-alanyl-D-glutamate. ATP is bound at residue 98–104 (GTNGKSS). Residues 144-145 (TT), Ser-171, Gln-177, and Arg-179 each bind UDP-N-acetyl-alpha-D-muramoyl-L-alanyl-D-glutamate. N6-carboxylysine is present on Lys-211. Meso-2,6-diaminopimelate-binding positions include Arg-372, 396-399 (DNPR), Gly-446, and Glu-450. Positions 396 to 399 (DNPR) match the Meso-diaminopimelate recognition motif motif.

Belongs to the MurCDEF family. MurE subfamily. The cofactor is Mg(2+). In terms of processing, carboxylation is probably crucial for Mg(2+) binding and, consequently, for the gamma-phosphate positioning of ATP.

Its subcellular location is the cytoplasm. The catalysed reaction is UDP-N-acetyl-alpha-D-muramoyl-L-alanyl-D-glutamate + meso-2,6-diaminopimelate + ATP = UDP-N-acetyl-alpha-D-muramoyl-L-alanyl-gamma-D-glutamyl-meso-2,6-diaminopimelate + ADP + phosphate + H(+). It functions in the pathway cell wall biogenesis; peptidoglycan biosynthesis. In terms of biological role, catalyzes the addition of meso-diaminopimelic acid to the nucleotide precursor UDP-N-acetylmuramoyl-L-alanyl-D-glutamate (UMAG) in the biosynthesis of bacterial cell-wall peptidoglycan. The protein is UDP-N-acetylmuramoyl-L-alanyl-D-glutamate--2,6-diaminopimelate ligase of Rickettsia typhi (strain ATCC VR-144 / Wilmington).